The primary structure comprises 389 residues: Ethanolamine-phosphate cytidylyltransferase (389 aa).

Residues 1–20 form a disordered region; sequence MIRNGRGAAGGAEQPGPGGR. CTP is bound by residues 221-222, 229-232, Lys-259, 307-310, and 336-340; these read AF, HVDF, HGKT, and SGSNL. Ser-338 bears the Phosphoserine mark. Phosphothreonine is present on residues Thr-341 and Thr-342.

This sequence belongs to the cytidylyltransferase family. In terms of tissue distribution, strongest expression in liver, heart, and skeletal muscle.

It catalyses the reaction phosphoethanolamine + CTP + H(+) = CDP-ethanolamine + diphosphate. It functions in the pathway phospholipid metabolism; phosphatidylethanolamine biosynthesis; phosphatidylethanolamine from ethanolamine: step 2/3. Its function is as follows. Ethanolamine-phosphate cytidylyltransferase that catalyzes the second step in the synthesis of phosphatidylethanolamine (PE) from ethanolamine via the CDP-ethanolamine pathway. Phosphatidylethanolamine is a dominant inner-leaflet phospholipid in cell membranes, where it plays a role in membrane function by structurally stabilizing membrane-anchored proteins, and participates in important cellular processes such as cell division, cell fusion, blood coagulation, and apoptosis. The protein is Ethanolamine-phosphate cytidylyltransferase (PCYT2) of Homo sapiens (Human).